A 130-amino-acid chain; its full sequence is Large ribosomal subunit protein bL12 (130 aa).

Belongs to the bacterial ribosomal protein bL12 family. As to quaternary structure, homodimer. Part of the ribosomal stalk of the 50S ribosomal subunit. Forms a multimeric L10(L12)X complex, where L10 forms an elongated spine to which 2 to 4 L12 dimers bind in a sequential fashion. Binds GTP-bound translation factors.

Forms part of the ribosomal stalk which helps the ribosome interact with GTP-bound translation factors. Is thus essential for accurate translation. This is Large ribosomal subunit protein bL12 from Mycolicibacterium gilvum (strain PYR-GCK) (Mycobacterium gilvum (strain PYR-GCK)).